The following is a 173-amino-acid chain: Photosystem I assembly protein Ycf3 (173 aa).

TPR repeat units follow at residues A36–D69, S73–L106, and G121–N154.

Belongs to the Ycf3 family.

The protein resides in the cellular thylakoid membrane. Essential for the assembly of the photosystem I (PSI) complex. May act as a chaperone-like factor to guide the assembly of the PSI subunits. The protein is Photosystem I assembly protein Ycf3 of Synechococcus sp. (strain JA-3-3Ab) (Cyanobacteria bacterium Yellowstone A-Prime).